The sequence spans 490 residues: MEQKPSKVECGSDPEENSARSPDGKRKRKNGQCSLKTSMSGYIPSYLDKDEQCVVCGDKATGYHYRCITCEGCKGFFRRTIQKNLHPTYSCKYDSCCVIDKITRNQCQLCRFKKCIAVGMAMDLVLDDSKRVAKRKLIEQNRERRRKEEMIRSLQQRPEPTPEEWDLIHIATEAHRSTNAQGSHWKQRRKFLPDDIGQSPIVSMPDGDKVDLEAFSEFTKIITPAITRVVDFAKKLPMFSELPCEDQIILLKGCCMEIMSLRAAVRYDPESDTLTLSGEMAVKREQLKNGGLGVVSDAIFELGKSLSAFNLDDTEVALLQAVLLMSTDRSGLLCVDKIEKSQEAYLLAFEHYVNHRKHNIPHFWPKLLMKEREVQSSILYKGAAAEGRPGGSLGVHPEGQQLLGMHVVQGPQVRQLEQQLGEAGSLQGPVLQHQSPKSPQQRLLELLHRSGILHARAVCGEDDSSEADSPSSSEEEPEVCEDLAGNAASP.

The tract at residues 1–32 (MEQKPSKVECGSDPEENSARSPDGKRKRKNGQ) is disordered. The modulating stretch occupies residues 1–52 (MEQKPSKVECGSDPEENSARSPDGKRKRKNGQCSLKTSMSGYIPSYLDKDEQ). Zn(2+) is bound by residues cysteine 53, cysteine 56, cysteine 70, cysteine 73, cysteine 91, cysteine 97, cysteine 107, and cysteine 110. NR C4-type zinc fingers lie at residues 53 to 73 (CVVC…CEGC) and 91 to 115 (CKYD…FKKC). Positions 53 to 127 (CVVCGDKATG…VGMAMDLVLD (75 aa)) form a DNA-binding region, nuclear receptor. An NR LBD domain is found at 163 to 407 (EEWDLIHIAT…EGQQLLGMHV (245 aa)). The 3,3',5-triiodo-L-thyronine site is built by arginine 228 and serine 277. A disordered region spans residues 457 to 490 (AVCGEDDSSEADSPSSSEEEPEVCEDLAGNAASP).

This sequence belongs to the nuclear hormone receptor family. NR1 subfamily. In terms of assembly, binds DNA as a dimer; homodimer and heterodimer with RXRB. Interacts with NCOA3 and NCOA6 coactivators, leading to a strong increase of transcription of target genes. Probably interacts with SFPQ. Interacts with C1D. Interacts with AKAP13. Interacts with TP53INP2. Interacts with PER2. Isoform alpha-2 and isoform alpha-1 interact with TACC1, but the interaction with alpha-1 is weaker. The interaction with isoform alpha-1, but not alpha-2, is decreased in the presence of thyroid hormone T3.

The protein resides in the nucleus. The protein localises to the cytoplasm. Its function is as follows. Nuclear hormone receptor that can act as a repressor or activator of transcription. High affinity receptor for thyroid hormones, including triiodothyronine and thyroxine. In terms of biological role, does not bind thyroid hormone and functions as a weak dominant negative inhibitor of thyroid hormone action. This chain is Thyroid hormone receptor alpha (THRA), found in Homo sapiens (Human).